A 210-amino-acid polypeptide reads, in one-letter code: Adenylate kinase (210 aa).

Position 10-15 (10-15 (GSGKGT)) interacts with ATP. Residues 28-57 (SVGKVLRTVMESNTAEADVVKKFIKSGKLV) form an NMP region. Residues R34, 55–57 (KLV), 83–86 (GYPR), and Q90 each bind AMP. Positions 120–158 (GRISCTDCGTIYNKLYCMPKINGVCDICNSSSFQNRVDD) are LID. R121 provides a ligand contact to ATP. Positions 124 and 127 each coordinate Zn(2+). ATP is bound at residue 130–131 (IY). Residues C144 and C147 each contribute to the Zn(2+) site. AMP-binding residues include R155 and R166. Q194 contacts ATP.

This sequence belongs to the adenylate kinase family. As to quaternary structure, monomer.

The protein resides in the cytoplasm. It catalyses the reaction AMP + ATP = 2 ADP. It functions in the pathway purine metabolism; AMP biosynthesis via salvage pathway; AMP from ADP: step 1/1. In terms of biological role, catalyzes the reversible transfer of the terminal phosphate group between ATP and AMP. Plays an important role in cellular energy homeostasis and in adenine nucleotide metabolism. This is Adenylate kinase from Orientia tsutsugamushi (strain Boryong) (Rickettsia tsutsugamushi).